Consider the following 361-residue polypeptide: Porphobilinogen deaminase (361 aa).

Serine 2 carries the N-acetylserine modification. Serine 69 carries the post-translational modification Phosphoserine. At lysine 74 the chain carries N6-acetyllysine. Position 147 is a phosphoserine (serine 147). Residue cysteine 261 is modified to S-(dipyrrolylmethanemethyl)cysteine.

It belongs to the HMBS family. Monomer. The cofactor is dipyrromethane.

The protein localises to the cytoplasm. Its subcellular location is the cytosol. The catalysed reaction is 4 porphobilinogen + H2O = hydroxymethylbilane + 4 NH4(+). It participates in porphyrin-containing compound metabolism; protoporphyrin-IX biosynthesis; coproporphyrinogen-III from 5-aminolevulinate: step 2/4. Functionally, as part of the heme biosynthetic pathway, catalyzes the sequential polymerization of four molecules of porphobilinogen to form hydroxymethylbilane, also known as preuroporphyrinogen. Catalysis begins with the assembly of the dipyrromethane cofactor by the apoenzyme from two molecules of porphobilinogen or from preuroporphyrinogen. The covalently linked cofactor acts as a primer, around which the tetrapyrrole product is assembled. In the last step of catalysis, the product, preuroporphyrinogen, is released, leaving the cofactor bound to the holodeaminase intact. The polypeptide is Porphobilinogen deaminase (Hmbs) (Mus musculus (Mouse)).